The sequence spans 82 residues: Exodeoxyribonuclease 7 small subunit (82 aa).

It belongs to the XseB family. Heterooligomer composed of large and small subunits.

The protein localises to the cytoplasm. It catalyses the reaction Exonucleolytic cleavage in either 5'- to 3'- or 3'- to 5'-direction to yield nucleoside 5'-phosphates.. Its function is as follows. Bidirectionally degrades single-stranded DNA into large acid-insoluble oligonucleotides, which are then degraded further into small acid-soluble oligonucleotides. The chain is Exodeoxyribonuclease 7 small subunit from Sodalis glossinidius (strain morsitans).